The primary structure comprises 175 residues: Large ribosomal subunit protein mL67 (175 aa).

The protein belongs to the mitochondrion-specific ribosomal protein mL67 family. As to quaternary structure, component of the mitochondrial large ribosomal subunit (mt-LSU). Mature yeast 74S mitochondrial ribosomes consist of a small (37S) and a large (54S) subunit. The 37S small subunit contains a 15S ribosomal RNA (15S mt-rRNA) and at least 32 different proteins. The 54S large subunit contains a 21S rRNA (21S mt-rRNA) and at least 45 different proteins.

The protein localises to the mitochondrion. Its function is as follows. Component of the mitochondrial ribosome (mitoribosome), a dedicated translation machinery responsible for the synthesis of mitochondrial genome-encoded proteins, including at least some of the essential transmembrane subunits of the mitochondrial respiratory chain. The mitoribosomes are attached to the mitochondrial inner membrane and translation products are cotranslationally integrated into the membrane. mL67/mhr1 also has extraribosomal functions, being involved in regulation of mitochondrial DNA recombination, maintenance and repair, and generation of homoplasmic cells. mL67/mhr1 also acts as transcription factor involved in regulation of RNA polymerase II-dependent transcription. The chain is Large ribosomal subunit protein mL67 (mhr1) from Schizosaccharomyces pombe (strain 972 / ATCC 24843) (Fission yeast).